Consider the following 531-residue polypeptide: Transactivator/viroplasmin protein (531 aa).

2 disordered regions span residues 80 to 101 and 505 to 531; these read ASGK…TATG and CKSE…SVLV. Polar residues-rich tracts occupy residues 91–100 and 505–517; these read SATSPEQTAT and CKSE…TSEE. Positions 518-531 are enriched in acidic residues; sequence GLQESEDEDFSVLV.

The protein belongs to the caulimoviridae viroplasmin family.

The protein resides in the host cytoplasm. Enhances the translation of downstream ORFs on polycistronic mRNAs. This is Transactivator/viroplasmin protein from Cestrum yellow leaf curling virus (CmYLCV).